A 223-amino-acid chain; its full sequence is Alpha-enolase (223 aa).

Mg(2+) is bound at residue serine 8. A Phosphotyrosine modification is found at tyrosine 12. The residue at position 25 (lysine 25) is an N6-acetyllysine. Glutamate 39 contacts substrate. Lysine 61 bears the N6-acetyllysine mark. The active-site Proton donor is the glutamate 69. Position 87 is an N6-acetyllysine; alternate (lysine 87). Residue lysine 87 is modified to N6-malonyllysine; alternate. An N6-succinyllysine; alternate modification is found at lysine 87. Residues aspartate 99 and aspartate 119 each contribute to the Mg(2+) site. Aspartate 119 is a binding site for substrate. Residues lysine 133 and lysine 141 each carry the N6-acetyllysine modification. Lysine 141 serves as the catalytic Proton acceptor. Residues 168-171 (SHRS) and lysine 192 contribute to the substrate site. The segment at 202–223 (YNQILRIEEELGSKSFRNPLAK) is required for interaction with PLG. Lysine 215 is subject to N6-acetyllysine; alternate. At lysine 215 the chain carries N6-malonyllysine; alternate. Lysine 215 bears the N6-succinyllysine; alternate mark.

Belongs to the enolase family. Mammalian enolase is composed of 3 isozyme subunits, alpha, beta and gamma, which can form homodimers or heterodimers which are cell-type and development-specific. ENO1 interacts with PLG in the neuronal plasma membrane and promotes its activation. The C-terminal lysine is required for this binding. Interacts with ENO4 and PGAM2. Interacts with CMTM6. It depends on Mg(2+) as a cofactor. In terms of processing, ISGylated. Post-translationally, lysine 2-hydroxyisobutyrylation (Khib) by p300/EP300 activates the phosphopyruvate hydratase activity.

Its subcellular location is the cytoplasm. It is found in the cell membrane. The enzyme catalyses (2R)-2-phosphoglycerate = phosphoenolpyruvate + H2O. Its pathway is carbohydrate degradation; glycolysis; pyruvate from D-glyceraldehyde 3-phosphate: step 4/5. In terms of biological role, glycolytic enzyme the catalyzes the conversion of 2-phosphoglycerate to phosphoenolpyruvate. In addition to glycolysis, involved in various processes such as growth control, hypoxia tolerance and allergic responses. May also function in the intravascular and pericellular fibrinolytic system due to its ability to serve as a receptor and activator of plasminogen on the cell surface of several cell-types such as leukocytes and neurons. Stimulates immunoglobulin production. The protein is Alpha-enolase of Mesocricetus auratus (Golden hamster).